Here is a 1174-residue protein sequence, read N- to C-terminus: DNA-directed RNA polymerase subunit beta (1174 aa).

It belongs to the RNA polymerase beta chain family. As to quaternary structure, the RNAP catalytic core consists of 2 alpha, 1 beta, 1 beta' and 1 omega subunit. When a sigma factor is associated with the core the holoenzyme is formed, which can initiate transcription.

The enzyme catalyses RNA(n) + a ribonucleoside 5'-triphosphate = RNA(n+1) + diphosphate. DNA-dependent RNA polymerase catalyzes the transcription of DNA into RNA using the four ribonucleoside triphosphates as substrates. The polypeptide is DNA-directed RNA polymerase subunit beta (Mycolicibacterium gilvum (strain PYR-GCK) (Mycobacterium gilvum (strain PYR-GCK))).